A 245-amino-acid polypeptide reads, in one-letter code: tRNA pseudouridine synthase A 2 (245 aa).

Residue Asp53 is the Nucleophile of the active site. Tyr111 contacts substrate.

This sequence belongs to the tRNA pseudouridine synthase TruA family. Homodimer.

It carries out the reaction uridine(38/39/40) in tRNA = pseudouridine(38/39/40) in tRNA. Formation of pseudouridine at positions 38, 39 and 40 in the anticodon stem and loop of transfer RNAs. The polypeptide is tRNA pseudouridine synthase A 2 (Bacillus cereus (strain ZK / E33L)).